A 116-amino-acid chain; its full sequence is MIVKRGDVYFADLSPVVGSEQGGVRPVLVIQNDIGNRFSPTAIVAAITAQIQKAKLPTHVEIDAKRYGFERDSVILLEQIRTIDKQRLTDKITHLDDEMMDKVDEALQISLALIDF.

This sequence belongs to the PemK/MazF family. Homodimer. Forms a complex with antitoxin EndoAI in which the toxin activity is inhibited. One dimer binds a ssRNA substrate, forms a heterohexamer composed of alternating toxin and antitoxin homodimers which inhibits the endoribonuclease activity. Antitoxin prevents RNA binding to the endoribonuclease.

Toxic component of a type II toxin-antitoxin (TA) system. Specific for 5'-UACAU-3' sequences, cleaving after the first U. Yields cleavage products with 3' phosphate and 5' hydroxyl groups. Cannot digest substrate with a UUdUACAUAA cleavage site. Overexpression is toxic for cell growth (shown in E.coli), probably by inhibiting protein synthesis through the cleavage of single-stranded RNA. The toxicity is reversed by the antitoxin EndoAI. Toxin activity cannot be inhibited by MazE from E.coli. The EndoA-EndoAI complex does not seem to bind its own promoter. This is Endoribonuclease EndoA from Bacillus subtilis (strain 168).